A 442-amino-acid polypeptide reads, in one-letter code: O-acetyl-L-homoserine sulfhydrylase (442 aa).

Residues 1 to 32 are disordered; that stretch reads MVGPSGESMPRNFKPETIALHGGQEPDPTTTS. Lysine 216 is subject to N6-(pyridoxal phosphate)lysine.

Belongs to the trans-sulfuration enzymes family. Pyridoxal 5'-phosphate serves as cofactor.

It catalyses the reaction O-acetyl-L-homoserine + hydrogen sulfide = L-homocysteine + acetate. It participates in amino-acid biosynthesis; L-methionine biosynthesis via de novo pathway; L-homocysteine from O-acetyl-L-homoserine: step 1/1. Its activity is regulated as follows. Feedback inhibited at very high concentrations of methionine or S-adenosylmethionine. Functionally, catalyzes the conversion of O-acetyl-L-homoserine (OAH) into homocysteine in the methionine biosynthesis pathway. Can also use O-succinyl-homoserine (OSH), although at low efficiency. This is O-acetyl-L-homoserine sulfhydrylase from Leptospira meyeri.